Reading from the N-terminus, the 549-residue chain is Glucose-6-phosphate isomerase (549 aa).

E355 serves as the catalytic Proton donor. Residues H387 and K515 contribute to the active site.

This sequence belongs to the GPI family.

It is found in the cytoplasm. It catalyses the reaction alpha-D-glucose 6-phosphate = beta-D-fructose 6-phosphate. It functions in the pathway carbohydrate biosynthesis; gluconeogenesis. Its pathway is carbohydrate degradation; glycolysis; D-glyceraldehyde 3-phosphate and glycerone phosphate from D-glucose: step 2/4. Functionally, catalyzes the reversible isomerization of glucose-6-phosphate to fructose-6-phosphate. This chain is Glucose-6-phosphate isomerase, found in Histophilus somni (strain 2336) (Haemophilus somnus).